The following is a 290-amino-acid chain: 4-diphosphocytidyl-2-C-methyl-D-erythritol kinase (290 aa).

The active site involves lysine 13. ATP is bound at residue 96–106 (PMGGGIGGGSS). Aspartate 138 is an active-site residue.

This sequence belongs to the GHMP kinase family. IspE subfamily.

It carries out the reaction 4-CDP-2-C-methyl-D-erythritol + ATP = 4-CDP-2-C-methyl-D-erythritol 2-phosphate + ADP + H(+). It participates in isoprenoid biosynthesis; isopentenyl diphosphate biosynthesis via DXP pathway; isopentenyl diphosphate from 1-deoxy-D-xylulose 5-phosphate: step 3/6. Catalyzes the phosphorylation of the position 2 hydroxy group of 4-diphosphocytidyl-2C-methyl-D-erythritol. The protein is 4-diphosphocytidyl-2-C-methyl-D-erythritol kinase of Vibrio cholerae serotype O1 (strain ATCC 39541 / Classical Ogawa 395 / O395).